The chain runs to 314 residues: Fructose-1,6-bisphosphatase class 1 (314 aa).

Residues E91, D112, L114, and D115 each coordinate Mg(2+). Residues 115 to 118 (DGSS), Y223, and K254 each bind substrate. E260 lines the Mg(2+) pocket.

Belongs to the FBPase class 1 family. In terms of assembly, homotetramer. Mg(2+) serves as cofactor.

Its subcellular location is the cytoplasm. The enzyme catalyses beta-D-fructose 1,6-bisphosphate + H2O = beta-D-fructose 6-phosphate + phosphate. It participates in carbohydrate biosynthesis; gluconeogenesis. The polypeptide is Fructose-1,6-bisphosphatase class 1 (Geobacter metallireducens (strain ATCC 53774 / DSM 7210 / GS-15)).